The primary structure comprises 440 residues: Enolase 1 (440 aa).

Residues H161 and E170 each coordinate substrate. E213 serves as the catalytic Proton donor. D248, E297, and D324 together coordinate Mg(2+). Residues E297 and D324 each contribute to the substrate site. The active-site Proton acceptor is the K349. Substrate contacts are provided by residues 376–379 (SHRS) and K400.

The protein belongs to the enolase family. As to quaternary structure, homodimer. It depends on Mg(2+) as a cofactor.

The protein resides in the cytoplasm. The enzyme catalyses (2R)-2-phosphoglycerate = phosphoenolpyruvate + H2O. Its pathway is carbohydrate degradation; glycolysis; pyruvate from D-glyceraldehyde 3-phosphate: step 4/5. The sequence is that of Enolase 1 (ENO1) from Candida albicans (strain SC5314 / ATCC MYA-2876) (Yeast).